Reading from the N-terminus, the 82-residue chain is Mu-conotoxin GVIIJ (82 aa).

The first 22 residues, 1-22, serve as a signal peptide directing secretion; sequence MKLTCVVIVAALLLTACQLITA. Residues 23-47 constitute a propeptide that is removed on maturation; it reads LDCGGTQKHRALRSTIKLSLLRQHR. Residue tryptophan 49 is modified to 6'-bromotryptophan. 3 disulfide bridges follow: cysteine 50–cysteine 65, cysteine 57–cysteine 69, and cysteine 64–cysteine 76. Residue proline 53 is modified to 4-hydroxyproline. Cysteine 71 is a binding site for a protein.

This sequence belongs to the conotoxin O1 superfamily. Cys-71 is a key residue that tethers to the channel by covalent attachment, leading to nearly irreversible inhibition (k(off) very low). In order to determine the solution structure without dimerization, this residue was mutated to Cys. In terms of tissue distribution, expressed by the venom duct.

It localises to the secreted. Mu-conotoxins block voltage-gated sodium channels (Nav). This toxin (GVIIJ(SSG)) blocks Nav1.1/SCN1A (Kd=11 nM), Nav1.2/SCN2A (Kd=11 nM), Nav1.3/SCN3A (Kd=15 nM), Nav1.4/SCN4A (Kd=4.7 nM), Nav1.6/SCN8A (Kd=360 nM) and Nav1.7/SCN9A (Kd=41 nM). It binds the channel at the newly described site 8, which is composed by two surfaces whose one contains a non-disulfide-bonded cysteine (which is free to covalently bind the toxin Cys-71). It is noteworthy that coexpression of subunits beta-2 or beta-4 (but not beta-1 or beta-3) protects rNav1.1-1.7 against block by the toxin, since these subunits (thanks to their extracellular domain) covalently bind to the key cysteine of the channel, thus preventing the covalent binding of the toxin. The sequence is that of Mu-conotoxin GVIIJ from Conus geographus (Geography cone).